We begin with the raw amino-acid sequence, 134 residues long: NAD(P)H-quinone oxidoreductase subunit 3 (134 aa).

A run of 3 helical transmembrane segments spans residues 20-40 (GYDAFLGFLLVSAAVPILALV), 78-98 (MFALVFVIFDVETVFLYPWAV), and 103-123 (LGLLAFIEALIFIAILLVALA).

Belongs to the complex I subunit 3 family. NDH-1 can be composed of about 15 different subunits; different subcomplexes with different compositions have been identified which probably have different functions.

The protein localises to the cellular thylakoid membrane. It catalyses the reaction a plastoquinone + NADH + (n+1) H(+)(in) = a plastoquinol + NAD(+) + n H(+)(out). It carries out the reaction a plastoquinone + NADPH + (n+1) H(+)(in) = a plastoquinol + NADP(+) + n H(+)(out). In terms of biological role, NDH-1 shuttles electrons from an unknown electron donor, via FMN and iron-sulfur (Fe-S) centers, to quinones in the respiratory and/or the photosynthetic chain. The immediate electron acceptor for the enzyme in this species is believed to be plastoquinone. Couples the redox reaction to proton translocation, and thus conserves the redox energy in a proton gradient. Cyanobacterial NDH-1 also plays a role in inorganic carbon-concentration. The sequence is that of NAD(P)H-quinone oxidoreductase subunit 3 from Prochlorococcus marinus (strain MIT 9303).